Reading from the N-terminus, the 174-residue chain is NADH-ubiquinone oxidoreductase chain 6 (174 aa).

A run of 4 helical transmembrane segments spans residues 25-45 (SMGL…SIYV), 48-68 (FWFS…LFIY), 82-102 (FSLT…FFMI), and 143-163 (LITL…VKIT).

The protein belongs to the complex I subunit 6 family.

The protein resides in the mitochondrion membrane. The catalysed reaction is a ubiquinone + NADH + 5 H(+)(in) = a ubiquinol + NAD(+) + 4 H(+)(out). Its function is as follows. Core subunit of the mitochondrial membrane respiratory chain NADH dehydrogenase (Complex I) that is believed to belong to the minimal assembly required for catalysis. Complex I functions in the transfer of electrons from NADH to the respiratory chain. The immediate electron acceptor for the enzyme is believed to be ubiquinone. This Anopheles albimanus (New world malaria mosquito) protein is NADH-ubiquinone oxidoreductase chain 6 (ND6).